Reading from the N-terminus, the 573-residue chain is MLNYFNTALLMVQMILKKQDPSIKFGQMSVNDQGFYLDYLSQTLNINPEDFNKLIKSLAKLCSSAQPISLKTVDLKIANQLLSDQPYLLELINEAKEKTVNLATVDNHHYYLPMAQLVDNTKLVKAFNFQSVGGAYFKGDKDNLVMVRLNGFGFENDKVMQDYLEIIEEQKQRDHRRINKILELFTFNQLAGPGMPIWLPNGQIVRQLIGDYVHSVQKKFGFMAVNTPILGNVDLYKKSGHYNHYAKDMFPELALLDGDKMMLRPMTCPHHCLVYLNKPRNYYDLPMRLSEDALLHRYEASGGLTGLERVRAMTLLDNHIFCRLDQIKTEILNAYQVIKEVIGTFNLKFHRIDLSLHDPNDKQSFIDNEQMWARSENQLEDALKDLGLEYTKQVGEAAFYGPKIDFQVKTALNKIITVSTIQLDFSLPSEEKFDIKYKTKDNTYEQGVIIHLGIIGTYERFVATLLEQTKGALDLWLAPKQAVIIPVNNSVHLEGCNQLLEKLLARDLRVTVDSRDERLNKKIRDHQVNKIPVQIIIGDNELKNPDLITYRLYGQEDSNQLELTKFIELFKKP.

Residues 174 to 474 form a catalytic region; it reads DHRRINKILE…LLEQTKGALD (301 aa). Residues C268, H319, and H451 each contribute to the Zn(2+) site.

It belongs to the class-II aminoacyl-tRNA synthetase family. Homodimer. Zn(2+) is required as a cofactor.

It is found in the cytoplasm. It catalyses the reaction tRNA(Thr) + L-threonine + ATP = L-threonyl-tRNA(Thr) + AMP + diphosphate + H(+). Functionally, catalyzes the attachment of threonine to tRNA(Thr) in a two-step reaction: L-threonine is first activated by ATP to form Thr-AMP and then transferred to the acceptor end of tRNA(Thr). Also edits incorrectly charged L-seryl-tRNA(Thr). This chain is Threonine--tRNA ligase, found in Mycoplasmoides gallisepticum (strain R(low / passage 15 / clone 2)) (Mycoplasma gallisepticum).